The following is a 243-amino-acid chain: Probable transcriptional regulatory protein Tbd_2215 (243 aa).

This sequence belongs to the TACO1 family.

Its subcellular location is the cytoplasm. The chain is Probable transcriptional regulatory protein Tbd_2215 from Thiobacillus denitrificans (strain ATCC 25259 / T1).